The primary structure comprises 80 residues: MKKQNLIDMEGTVTESLPNATFRACLDNGCQVLTHISGRMRRSYIRILPGDRVRVELSPYDLTKGRIIYRLRSRHTNNSQ.

One can recognise an S1-like domain in the interval 1–72 (MKKQNLIDME…TKGRIIYRLR (72 aa)).

It belongs to the IF-1 family. In terms of assembly, component of the 30S ribosomal translation pre-initiation complex which assembles on the 30S ribosome in the order IF-2 and IF-3, IF-1 and N-formylmethionyl-tRNA(fMet); mRNA recruitment can occur at any time during PIC assembly.

It localises to the plastid. Its subcellular location is the chloroplast. Functionally, one of the essential components for the initiation of protein synthesis. Stabilizes the binding of IF-2 and IF-3 on the 30S subunit to which N-formylmethionyl-tRNA(fMet) subsequently binds. Helps modulate mRNA selection, yielding the 30S pre-initiation complex (PIC). Upon addition of the 50S ribosomal subunit IF-1, IF-2 and IF-3 are released leaving the mature 70S translation initiation complex. The chain is Translation initiation factor IF-1, chloroplastic from Adiantum capillus-veneris (Maidenhair fern).